The sequence spans 1252 residues: HEAT repeat-containing protein 6 (1252 aa).

Residues 230–269 form an HEAT 1 repeat; sequence PDLLGKSGLLMKLSDVTHSDPEVRRAAVHCMANLCLSVPG. Positions 365–417 are disordered; sequence DGRSPVKPQQPESSAARPSANKKKKYKVKPKKTQQGEKAEEEEPYGEVDAAPG. Over residues 384–396 the composition is skewed to basic residues; that stretch reads ANKKKKYKVKPKK. A phosphoserine mark is found at S471 and S474. HEAT repeat units lie at residues 524–562, 586–624, and 630–667; these read ELGS…GSKQ, SSIR…NAPY, and SLLT…THAP. A Phosphothreonine modification is found at T689. Phosphoserine is present on S714.

The polypeptide is HEAT repeat-containing protein 6 (Heatr6) (Rattus norvegicus (Rat)).